A 196-amino-acid polypeptide reads, in one-letter code: Pyridoxal 5'-phosphate synthase subunit PdxT (196 aa).

Gly47–Ser49 is an L-glutamine binding site. The active-site Nucleophile is Cys79. L-glutamine contacts are provided by residues Arg106 and Ile134–Arg135. Residues His170 and Glu172 each act as charge relay system in the active site.

This sequence belongs to the glutaminase PdxT/SNO family. In the presence of PdxS, forms a dodecamer of heterodimers. Only shows activity in the heterodimer.

The enzyme catalyses aldehydo-D-ribose 5-phosphate + D-glyceraldehyde 3-phosphate + L-glutamine = pyridoxal 5'-phosphate + L-glutamate + phosphate + 3 H2O + H(+). It carries out the reaction L-glutamine + H2O = L-glutamate + NH4(+). It participates in cofactor biosynthesis; pyridoxal 5'-phosphate biosynthesis. Its function is as follows. Catalyzes the hydrolysis of glutamine to glutamate and ammonia as part of the biosynthesis of pyridoxal 5'-phosphate. The resulting ammonia molecule is channeled to the active site of PdxS. The polypeptide is Pyridoxal 5'-phosphate synthase subunit PdxT (Bacillus cereus (strain Q1)).